Consider the following 549-residue polypeptide: MEEFKKYFERDSYWQQHFLYPLLFQEYIYALAHIHNHGLNGSIFYESGEVLGYDNKSSLILVKRLILRMYQQNFLIHSSNESHQNGFVGHKNPFFSQMISGGFAVIVEIPFSLPSLIEKKKKEITKSQNLRSIHSIFPFLVDQFSHLNYVSDILIPYPIHLEILIQIIQSWIQDVPSLHLLRFFLYEYHNWNSFITRKKSLSTFGKENPRFFWFLYNSYVSEYESVFCFLRKHSSYLLSTSYRNLIERTHFYGKIEHLPVVCSNDFHKNLQLFKDPCMHYVRYQGKAILASKGTSLLMKKWKWYLVNFWECNFSFWFQPYRIHINQLSNSSFLFWGYFSIVLINPLPVRSQMLGYSCLIDNTLTKKLETLVPIIPLIGSLSKAKFCNVSGHPASKPIWTDLSDSDIIDRFVRICRTLSHYHSGSSKKQSLYRMKYILRLSCARTLARKHKTTVRAFFQRLGSGFLEEFFTEEQKFLSLVLPRTSLASGSDRVYKERIWYLDIIRINDLVNYSRLAMELCTGNITKRIEKRSKIAFLFSTDMLKCSCSGS.

This sequence belongs to the intron maturase 2 family. MatK subfamily.

The protein localises to the plastid. The protein resides in the chloroplast. Its function is as follows. Usually encoded in the trnK tRNA gene intron. Probably assists in splicing its own and other chloroplast group II introns. The chain is Maturase K from Albidella oligococca (Caldesia oligococca).